Reading from the N-terminus, the 374-residue chain is tRNA-specific 2-thiouridylase MnmA (374 aa).

ATP is bound by residues 15–22 (GMSGGVDS) and M41. Positions 101–103 (NPD) are interaction with target base in tRNA. C106 acts as the Nucleophile in catalysis. C106 and C206 are disulfide-bonded. Residue G130 coordinates ATP. Residues 156–158 (KDQ) form an interaction with tRNA region. The active-site Cysteine persulfide intermediate is the C206. Residues 324 to 325 (RY) are interaction with tRNA.

It belongs to the MnmA/TRMU family.

It is found in the cytoplasm. The enzyme catalyses S-sulfanyl-L-cysteinyl-[protein] + uridine(34) in tRNA + AH2 + ATP = 2-thiouridine(34) in tRNA + L-cysteinyl-[protein] + A + AMP + diphosphate + H(+). Functionally, catalyzes the 2-thiolation of uridine at the wobble position (U34) of tRNA, leading to the formation of s(2)U34. This is tRNA-specific 2-thiouridylase MnmA from Aromatoleum aromaticum (strain DSM 19018 / LMG 30748 / EbN1) (Azoarcus sp. (strain EbN1)).